The primary structure comprises 929 residues: Ribonucleoside-diphosphate reductase large chain (929 aa).

The ATP-cone domain maps to 1–92; that stretch reads MYVKKRDGRQ…VSNLHKQTKK (92 aa). ATP contacts are provided by residues 5-6, 11-17, Thr-53, and Asp-57; these read KR and ERVQFDK. The GDP site is built by Ser-202 and Ser-217. Residues Cys-218 and Cys-444 are joined by a disulfide bond. Residues 226-228, Lys-243, Arg-256, and 263-264 each bind dTTP; these read DSI and AG. Residue Asn-427 participates in GDP binding. Asn-427 acts as the Proton acceptor in catalysis. Cys-429 functions as the Cysteine radical intermediate in the catalytic mechanism. Residues Glu-431 and 605 to 608 contribute to the GDP site; that span reads TAST. The Proton acceptor role is filled by Glu-431. Positions 789 to 904 are disordered; sequence ENTSGPRPYA…RDENIYSNAP (116 aa). Residues 800 to 809 show a composition bias toward polar residues; sequence TGVSGTSTPI. Basic and acidic residues predominate over residues 868-884; the sequence is VKTEDIGSPLLERKEGQ. Over residues 885–894 the composition is skewed to acidic residues; it reads NEDVDEDSQE.

The protein belongs to the ribonucleoside diphosphate reductase large chain family.

It carries out the reaction a 2'-deoxyribonucleoside 5'-diphosphate + [thioredoxin]-disulfide + H2O = a ribonucleoside 5'-diphosphate + [thioredoxin]-dithiol. With respect to regulation, under complex allosteric control mediated by deoxynucleoside triphosphates and ATP binding to separate specificity and activation sites on the large subunit. The type of nucleotide bound at the specificity site determines substrate preference. It seems probable that ATP makes the enzyme reduce CDP and UDP, dGTP favors ADP reduction and dTTP favors GDP reduction. Stimulated by ATP and inhibited by dATP binding to the activity site. Provides the precursors necessary for DNA synthesis. Catalyzes the biosynthesis of deoxyribonucleotides from the corresponding ribonucleotides. The chain is Ribonucleoside-diphosphate reductase large chain (rnr-1) from Neurospora crassa (strain ATCC 24698 / 74-OR23-1A / CBS 708.71 / DSM 1257 / FGSC 987).